Reading from the N-terminus, the 1094-residue chain is MGCAYSKTCIGQICATKENSIRQTHQQAPSRGGTRATAAAAAVEEDNPVFNFSSDAVDDVDNDEIHQLGLSRDQEWGITRLSRVSSQFLPPDGSRVVKVPSCNYELRCSFLSQRGYYPDALDKANQDSFAIHTPFGSNSDDHFFGVFDGHGEFGAQCSQFVKRRLCENLLRHGRFRVDPAEACNSAFLTTNSQLHADLVDDSMSGTTAITVMVRGRTIYVANAGDSRAVLAEKRDGDLVAVDLSIDQTPFRPDELERVKLCGARVLTLDQIEGLKNPDVQCWGTEEDDDGDPPRLWVPNGMYPGTAFTRSIGDSIAETIGVVANPEIAVVELTPDNPFFVVASDGVFEFISSQTVVDMVAKHKDPRDACAAIVAESYRLWLQYETRTDDITIIVVHIDGLKDDAPRQLSSTGTQLQPPIPQVVELTGSESPSTFGWNSKNQRVRHDLSRARIRAIENSLENGHAWVPPSPAHRKTWEEEAHIERVLRDHFLFRKLTDSQCQVLLDCMQRLEANPGDIVVKQGGEGDCFYVVGSGEFEVLATQDGKNGEVPRILQRYTAEKQSSFGELALMHNKPLQASVRAVDHGTLWALKREDFRGILMSEFSNLASLKLLRSVDLLSRLTILQLSHVAESLSEACFSDGQTIVTKDQKLQGLYVIQKGRVKISFCTEVLESQNVSSLTTGITNEYDNLEIGTEVSIEKHEGSYFGEWALLGELKDSLSVVAVGEVVCVVLTKENFESAVGPLTNISDDGPKTRHSSFELSKESAKVTDTTALAKATLADLEWTTCLSTTDCSEIGLVHLKDKENLLSLKRFSKQKVKKLGKEAQVLKERNLMKNVIKPSAIVPEILCTCVDQTFAAILLNTTLACPISSLLHSPLDESSVRFITGSLVSAIEDIHKNEILFRGSSPELLMLDQSGYLQIVDFRFAKKLSGERTFTICGNADYLAPEIVQGKGHGYAADWWALGVLIYYMLEGEMPFGSWRESELDTFQKIAKGQLTFPRVLSSEAEDLITKLLEVDENLRFGSQGGPESIKKHPWFNGLKWEAISNREFQVPQEIISRIHHHLENDNVLPLETSKSLDTTEDQDAQNWLEEW.

Residues 107-397 (RCSFLSQRGY…DDITIIVVHI (291 aa)) form the PPM-type phosphatase domain. 4 residues coordinate Mn(2+): Asp-148, Gly-149, Asp-344, and Asp-388. Residues 491-616 (LFRK…RSVD) and 617-758 (LLSR…RHSS) contribute to the a nucleoside 3',5'-cyclic phosphate site. One can recognise a Protein kinase domain in the interval 785-1038 (TTCLSTTDCS…PESIKKHPWF (254 aa)). ATP is bound by residues 791–799 (TDCSEIGLV) and Lys-811.

It in the N-terminal section; belongs to the PP2C family. The protein in the C-terminal section; belongs to the protein kinase superfamily. AGC Ser/Thr protein kinase family. It depends on Mg(2+) as a cofactor. Mn(2+) serves as cofactor.

It carries out the reaction O-phospho-L-seryl-[protein] + H2O = L-seryl-[protein] + phosphate. The enzyme catalyses O-phospho-L-threonyl-[protein] + H2O = L-threonyl-[protein] + phosphate. The chain is Protein phosphatase 2C and cyclic nucleotide-binding/kinase domain-containing protein from Arabidopsis thaliana (Mouse-ear cress).